Consider the following 624-residue polypeptide: tRNA uridine 5-carboxymethylaminomethyl modification enzyme MnmG (624 aa).

FAD contacts are provided by residues 13–18 (GGGHAG), Val125, and Ser180. NAD(+) is bound at residue 273–287 (GPRYCPSIEDKIVRF). Gln370 contacts FAD.

It belongs to the MnmG family. In terms of assembly, homodimer. Heterotetramer of two MnmE and two MnmG subunits. It depends on FAD as a cofactor.

The protein resides in the cytoplasm. Its function is as follows. NAD-binding protein involved in the addition of a carboxymethylaminomethyl (cmnm) group at the wobble position (U34) of certain tRNAs, forming tRNA-cmnm(5)s(2)U34. This is tRNA uridine 5-carboxymethylaminomethyl modification enzyme MnmG from Legionella pneumophila (strain Paris).